The following is a 1403-amino-acid chain: Protein FAM135B (1403 aa).

Disordered stretches follow at residues 445–483 (EKNLINQNSSSRKDIPLSTTEAPQLGSDEDVTRRPEVQE), 514–548 (EDECWTGPRPDAVKDSLTDTDICSRSPGPDEGQTP), 648–669 (REALDTKPSQPDHAEEPEDLSA), and 718–740 (RHAHHRNSLEGGHTESNTSLPSG). A compositionally biased stretch (basic and acidic residues) spans 649 to 661 (EALDTKPSQPDHA). Residues 731-740 (TESNTSLPSG) are compositionally biased toward polar residues. A phosphoserine mark is found at Ser775 and Ser776. Residues 790–819 (TAGFSEDLDPSSKENSPPRHTSLSYGGSRV) form a disordered region. Residues 802-814 (KENSPPRHTSLSY) are compositionally biased toward polar residues.

Belongs to the FAM135 family.

This Mus musculus (Mouse) protein is Protein FAM135B (Fam135b).